A 448-amino-acid chain; its full sequence is NADP-specific glutamate dehydrogenase (448 aa).

Substrate-binding residues include Lys88, Gln109, and Lys112. The active-site Proton donor is Lys124. Gly163 contributes to the substrate binding site. 2 residues coordinate NADP(+): Thr207 and Asn238. A substrate-binding site is contributed by Ser375.

It belongs to the Glu/Leu/Phe/Val dehydrogenases family. As to quaternary structure, homohexamer.

It catalyses the reaction L-glutamate + NADP(+) + H2O = 2-oxoglutarate + NH4(+) + NADPH + H(+). Its function is as follows. Catalyzes the reversible oxidative deamination of glutamate to alpha-ketoglutarate and ammonia. The sequence is that of NADP-specific glutamate dehydrogenase (gdhA) from Psychrobacter sp. (strain TAD1).